Consider the following 517-residue polypeptide: MFS efflux transporter inpD (517 aa).

A disordered region spans residues 1–24; it reads MEKTQTPSLTPDELSARSSTPFEE. The next 5 membrane-spanning stretches (helical) occupy residues 37–57, 59–79, 89–109, 112–132, and 151–171; these read LKFSFIFVGLCLSVFQVALSL, DIGWYGSAYLFTDCAFQLVFG, IVYLGALLLFEIGSIICATAP, IALILGRTIAGIGAGGILSGA, and ILGAVNGIAFICGPLLAGGII. N-linked (GlcNAc...) asparagine glycosylation is present at Asn172. 9 consecutive transmembrane segments (helical) span residues 178-198, 219-239, 247-267, 292-312, 328-348, 352-372, 381-401, 412-432, and 485-505; these read WIFYINPIISAPTFFITVFLL, LPAFTLFLGSILCLILALLWG, NARIIVLFILFGVIMLAFMLV, FFSFCTSGTGFILEYYLPIWL, LPIIAAAVVFTTLCGILTPVI, VPFMIIATMLLSVGMGLLSTL, VLGFQVPAGVGLGCALQQTLV, IPIGVSLIVLAQTLGGTIALS, and AIVKTWYLSIGLAAASIIGVL.

This sequence belongs to the major facilitator superfamily.

The protein localises to the cell membrane. MFS efflux transporter; part of the inp gene cluster that mediates the biosynthesis of fellutamide B, a mycotoxin that acts as a proteasome inhibitor. In the first step of fellutabmide B biosynthesis inpC activates 3-hydroxydodecanoic acid to generate 3-hydroxydodecanoyl-AMP that is then loaded onto the T0 domain of inpB. The 3-hydroxydodecanoyl-S-phosphopantetheinyl-T0 is sequentially extended with L-Asn and L-Gln by the two CAT modules of inpB. The linear lipodipeptide from inpB is then transferred onto inpA for the addition of the third amino acid, L-Leu. Reductive releasing of the lipotripeptide by the TE domain of inpA produces (2S)-fellutamide B. InpF might be involved in the release and transfer of the lipodipeptide from inpB to inpA. The inp cluster-encoded proteasome subunit inpE confers resistance to internally produced fellutamides. The MFS efflux transporter inpD may contribute to fellutamide resistance as well. This chain is MFS efflux transporter inpD, found in Emericella nidulans (strain FGSC A4 / ATCC 38163 / CBS 112.46 / NRRL 194 / M139) (Aspergillus nidulans).